Reading from the N-terminus, the 201-residue chain is MLLSRYIDDDLRECGCDEAGRGCLAGPVYAAAVILPADFSHPLLNDSKQLSEKQRYTLRPVIESETIGWGIGIVSPQEIDEINILRASFLAMHRAIEQLPFRPERLLIDGNRFDPFEQIPHHCIVGGDARYRSIAAASILAKTYRDDSMLRLNKDFPMYGWERNKGYPSPAHKSAIRRFGVSPHHRLTFRGVVDADRPTTE.

Residues 11–201 (LRECGCDEAG…VVDADRPTTE (191 aa)) form the RNase H type-2 domain. A divalent metal cation is bound by residues aspartate 17, glutamate 18, and aspartate 109.

Belongs to the RNase HII family. Requires Mn(2+) as cofactor. Mg(2+) serves as cofactor.

Its subcellular location is the cytoplasm. The catalysed reaction is Endonucleolytic cleavage to 5'-phosphomonoester.. Its function is as follows. Endonuclease that specifically degrades the RNA of RNA-DNA hybrids. The sequence is that of Ribonuclease HII (rnhB) from Porphyromonas gingivalis (strain ATCC BAA-308 / W83).